Here is a 53-residue protein sequence, read N- to C-terminus: Large ribosomal subunit protein bL32 (53 aa).

The disordered stretch occupies residues 1 to 27; that stretch reads MAVQQNKKSRSRRDMRRSHDALTTAAV. A compositionally biased stretch (basic residues) spans 7–16; it reads KKSRSRRDMR.

The protein belongs to the bacterial ribosomal protein bL32 family.

The chain is Large ribosomal subunit protein bL32 from Glaesserella parasuis serovar 5 (strain SH0165) (Haemophilus parasuis).